A 339-amino-acid polypeptide reads, in one-letter code: Holliday junction branch migration complex subunit RuvB (339 aa).

A large ATPase domain (RuvB-L) region spans residues 2-187 (KDVNDEERII…FGIIEHMQYY (186 aa)). ATP contacts are provided by residues leucine 26, arginine 27, glycine 68, lysine 71, threonine 72, threonine 73, 134 to 136 (EDF), arginine 177, tyrosine 187, and arginine 224. Threonine 72 contacts Mg(2+). Residues 188-258 (SIDDLEKIIQ…TTKHSLHLLE (71 aa)) form a small ATPAse domain (RuvB-S) region. Positions 261–339 (DEGLDQTDRK…QLGYPPKKAE (79 aa)) are head domain (RuvB-H). Arginine 316 and arginine 321 together coordinate DNA.

The protein belongs to the RuvB family. Homohexamer. Forms an RuvA(8)-RuvB(12)-Holliday junction (HJ) complex. HJ DNA is sandwiched between 2 RuvA tetramers; dsDNA enters through RuvA and exits via RuvB. An RuvB hexamer assembles on each DNA strand where it exits the tetramer. Each RuvB hexamer is contacted by two RuvA subunits (via domain III) on 2 adjacent RuvB subunits; this complex drives branch migration. In the full resolvosome a probable DNA-RuvA(4)-RuvB(12)-RuvC(2) complex forms which resolves the HJ.

It localises to the cytoplasm. It carries out the reaction ATP + H2O = ADP + phosphate + H(+). In terms of biological role, the RuvA-RuvB-RuvC complex processes Holliday junction (HJ) DNA during genetic recombination and DNA repair, while the RuvA-RuvB complex plays an important role in the rescue of blocked DNA replication forks via replication fork reversal (RFR). RuvA specifically binds to HJ cruciform DNA, conferring on it an open structure. The RuvB hexamer acts as an ATP-dependent pump, pulling dsDNA into and through the RuvAB complex. RuvB forms 2 homohexamers on either side of HJ DNA bound by 1 or 2 RuvA tetramers; 4 subunits per hexamer contact DNA at a time. Coordinated motions by a converter formed by DNA-disengaged RuvB subunits stimulates ATP hydrolysis and nucleotide exchange. Immobilization of the converter enables RuvB to convert the ATP-contained energy into a lever motion, pulling 2 nucleotides of DNA out of the RuvA tetramer per ATP hydrolyzed, thus driving DNA branch migration. The RuvB motors rotate together with the DNA substrate, which together with the progressing nucleotide cycle form the mechanistic basis for DNA recombination by continuous HJ branch migration. Branch migration allows RuvC to scan DNA until it finds its consensus sequence, where it cleaves and resolves cruciform DNA. The protein is Holliday junction branch migration complex subunit RuvB of Lactobacillus gasseri (strain ATCC 33323 / DSM 20243 / BCRC 14619 / CIP 102991 / JCM 1131 / KCTC 3163 / NCIMB 11718 / NCTC 13722 / AM63).